We begin with the raw amino-acid sequence, 337 residues long: Anthranilate phosphoribosyltransferase (337 aa).

5-phospho-alpha-D-ribose 1-diphosphate is bound by residues G81, G84–D85, S89, N91–T94, K109–S117, and A121. G81 provides a ligand contact to anthranilate. Mg(2+) is bound at residue S93. N112 contributes to the anthranilate binding site. R167 contributes to the anthranilate binding site. 2 residues coordinate Mg(2+): D226 and E227.

Belongs to the anthranilate phosphoribosyltransferase family. Homodimer. It depends on Mg(2+) as a cofactor.

The catalysed reaction is N-(5-phospho-beta-D-ribosyl)anthranilate + diphosphate = 5-phospho-alpha-D-ribose 1-diphosphate + anthranilate. Its pathway is amino-acid biosynthesis; L-tryptophan biosynthesis; L-tryptophan from chorismate: step 2/5. Its function is as follows. Catalyzes the transfer of the phosphoribosyl group of 5-phosphorylribose-1-pyrophosphate (PRPP) to anthranilate to yield N-(5'-phosphoribosyl)-anthranilate (PRA). In Methylorubrum extorquens (strain CM4 / NCIMB 13688) (Methylobacterium extorquens), this protein is Anthranilate phosphoribosyltransferase.